Reading from the N-terminus, the 200-residue chain is Glycerol-3-phosphate acyltransferase (200 aa).

A run of 5 helical transmembrane segments spans residues leucine 6–valine 26, serine 56–phenylalanine 76, glutamine 82–phenylalanine 102, alanine 118–isoleucine 138, and tyrosine 141–aspartate 161.

Belongs to the PlsY family. As to quaternary structure, probably interacts with PlsX.

It localises to the cell inner membrane. It catalyses the reaction an acyl phosphate + sn-glycerol 3-phosphate = a 1-acyl-sn-glycero-3-phosphate + phosphate. The protein operates within lipid metabolism; phospholipid metabolism. Its function is as follows. Catalyzes the transfer of an acyl group from acyl-phosphate (acyl-PO(4)) to glycerol-3-phosphate (G3P) to form lysophosphatidic acid (LPA). This enzyme utilizes acyl-phosphate as fatty acyl donor, but not acyl-CoA or acyl-ACP. This is Glycerol-3-phosphate acyltransferase from Shewanella sediminis (strain HAW-EB3).